A 386-amino-acid polypeptide reads, in one-letter code: Ribonucleoside-diphosphate reductase subunit M2 (386 aa).

Ser-20 carries the phosphoserine modification. Residue Thr-33 is modified to Phosphothreonine. Residues 49–51 (RRI) carry the Cy motif. The Fe cation site is built by Asp-139, Glu-170, and His-173. Tyr-177 is a catalytic residue. Glu-233, Glu-267, and His-270 together coordinate Fe cation.

The protein belongs to the ribonucleoside diphosphate reductase small chain family. In terms of assembly, heterodimer of a large and a small subunit. Interacts (via Cy motif and when phosphorylated at Thr-33) with CCNF; the interaction occurs exclusively in G2 and early M. It depends on Fe cation as a cofactor. In terms of processing, phosphorylation on Ser-20 relieves the inhibitory effect on Wnt signaling. Phosphorylated on Thr-33 by CDK1 and CDK2; predominantly in G2 and M phase. Ubiquitinated by the SCF(CCNF) E3 ubiquitin-protein ligase complex; leading to its degradation by the proteasome.

The protein resides in the cytoplasm. It localises to the nucleus. The catalysed reaction is a 2'-deoxyribonucleoside 5'-diphosphate + [thioredoxin]-disulfide + H2O = a ribonucleoside 5'-diphosphate + [thioredoxin]-dithiol. In terms of biological role, provides the precursors necessary for DNA synthesis. Catalyzes the biosynthesis of deoxyribonucleotides from the corresponding ribonucleotides. Inhibits Wnt signaling. The chain is Ribonucleoside-diphosphate reductase subunit M2 (RRM2) from Mesocricetus auratus (Golden hamster).